Consider the following 339-residue polypeptide: MSAYKRKRGSLPEVATNTKKAKKQLAGSEQEATAGEEFIVPPPVSEGKWKNKERVLIFSSRGINFRTRHLMQDLRSLMPHSRAETKMDRKDKLFVVNEVCEMKNCNKCIYFEAKKKQDLYMWLSNSPEGPSAKFLVQNIHTLAELKMSGNCLKGSRPILSFDPAFDREPQYALLKELLTQIFGTPRYHPRSQPFVDHIFTFSIADNRIWFRNYQIIEEDAALVEIGPRFVLNLIKIFKGSFGGPTLYENPHYQSPNMHRRMIRLATAAKVKEKQQVKEVQKLKKEEDRPVIPVDPTEAVFYTPAEEKPQVIETEPPAPKPKMKRKDKQFKRQRMAKKRM.

The interval 1 to 34 (MSAYKRKRGSLPEVATNTKKAKKQLAGSEQEATA) is disordered. Residues 53–242 (ERVLIFSSRG…LIKIFKGSFG (190 aa)) enclose the Brix domain. Residues 304-339 (AEEKPQVIETEPPAPKPKMKRKDKQFKRQRMAKKRM) are disordered. Basic residues predominate over residues 320-339 (PKMKRKDKQFKRQRMAKKRM).

The protein belongs to the BRX1 family. Ubiquitous.

Its subcellular location is the nucleus. The protein resides in the nucleolus. Required for biogenesis of the 60S ribosomal subunit. The chain is Ribosome biogenesis protein BRX1 homolog (brix1) from Xenopus laevis (African clawed frog).